Consider the following 95-residue polypeptide: Acylphosphatase 2 (95 aa).

Residues 6 to 93 (RVIVTVQGRV…PLPPGFEVRP (88 aa)) form the Acylphosphatase-like domain. Catalysis depends on residues Arg-21 and Asn-39.

Belongs to the acylphosphatase family.

The enzyme catalyses an acyl phosphate + H2O = a carboxylate + phosphate + H(+). The protein is Acylphosphatase 2 (acyP2) of Ralstonia nicotianae (strain ATCC BAA-1114 / GMI1000) (Ralstonia solanacearum).